A 445-amino-acid chain; its full sequence is Alpha-1,3-mannosyl-glycoprotein 2-beta-N-acetylglucosaminyltransferase (445 aa).

The Cytoplasmic portion of the chain corresponds to 1–6; that stretch reads MLKKQS. Residues 7 to 29 traverse the membrane as a helical; Signal-anchor for type II membrane protein segment; that stretch reads AGLVLWGAILFVAWNALLLLFFW. Residues 30–445 lie on the Lumenal side of the membrane; that stretch reads TRPAPGRPPS…TWEGYDPSWN (416 aa). Cysteine 113 and cysteine 143 are oxidised to a cystine. Substrate-binding residues include arginine 115, aspartate 142, histidine 188, and aspartate 210. Mn(2+) is bound at residue aspartate 211. A disulfide bridge connects residues cysteine 237 and cysteine 303. Aspartate 289 serves as the catalytic Proton acceptor. Position 320 (serine 320) interacts with substrate.

This sequence belongs to the glycosyltransferase 13 family. As to quaternary structure, interacts with MGAT4D. Interacts with BRI3 (isoforms 1 and 2); the interaction with isoform 2 is weaker than with isoform 1. It depends on Mn(2+) as a cofactor.

Its subcellular location is the golgi apparatus membrane. It localises to the cytoplasm. The protein localises to the perinuclear region. It carries out the reaction N(4)-(alpha-D-Man-(1-&gt;3)-[alpha-D-Man-(1-&gt;3)-[alpha-D-Man-(1-&gt;6)]-alpha-D-Man-(1-&gt;6)]-beta-D-Man-(1-&gt;4)-beta-D-GlcNAc-(1-&gt;4)-beta-D-GlcNAc)-L-asparaginyl-[protein] (N-glucan mannose isomer 5A1,2) + UDP-N-acetyl-alpha-D-glucosamine = N(4)-{beta-D-GlcNAc-(1-&gt;2)-alpha-D-Man-(1-&gt;3)-[alpha-D-Man-(1-&gt;3)-[alpha-D-Man-(1-&gt;6)]-alpha-D-Man-(1-&gt;6)]-beta-D-Man-(1-&gt;4)-beta-D-GlcNAc-(1-&gt;4)-beta-D-GlcNAc}-L-asparaginyl-[protein] + UDP + H(+). It participates in protein modification; protein glycosylation. In terms of biological role, initiates complex N-linked carbohydrate formation. Essential for the conversion of high-mannose to hybrid and complex N-glycans. The polypeptide is Alpha-1,3-mannosyl-glycoprotein 2-beta-N-acetylglucosaminyltransferase (MGAT1) (Homo sapiens (Human)).